A 61-amino-acid chain; its full sequence is Tryptophyllin-T1 (61 aa).

The first 22 residues, 1 to 22, serve as a signal peptide directing secretion; sequence MDFLKKSLFLVLFLGLVSISLC. Positions 23–53 are excised as a propeptide; that stretch reads DEEKRQDDDEASEREEKKEIHEEGNQEERRD. Residues 25-61 are disordered; that stretch reads EKRQDDDEASEREEKKEIHEEGNQEERRDRPPSWIPK. Residues 36–55 show a composition bias toward basic and acidic residues; the sequence is REEKKEIHEEGNQEERRDRP. Pro56 bears the 4-hydroxyproline; partial mark.

The protein belongs to the frog skin active peptide (FSAP) family. Tryptophillin subfamily. Expressed by the skin glands.

The protein resides in the secreted. This is Tryptophyllin-T1 from Pithecopus azureus (Orange-legged monkey tree frog).